Here is a 286-residue protein sequence, read N- to C-terminus: uncharacterized protein (286 aa).

Disordered regions lie at residues Met-1–Val-38, His-108–Lys-146, Arg-196–Leu-227, and Asp-241–Ser-286. Low complexity predominate over residues Ser-18 to Ser-29. Residues Asp-243–His-268 show a composition bias toward basic and acidic residues. Over residues Glu-269–Ser-278 the composition is skewed to polar residues.

This is an uncharacterized protein from Caenorhabditis elegans.